The following is a 312-amino-acid chain: MTKMKCAIIGSGNIGTDLMIKLLKGSDTLELAAVVGIDPASEGLAMARERGVATTHEGIEGLRKLPAYPEIGIAFDATSAYAHKEHDAALQADGKLVVDLTPAAIGPFFVPPVGGVLDSEIRNVNMVTCGGQATIPIVAAVSRVTPVHYAEIVASVSSRSAGPGTRANIDEFTRTTAQAIEIVGGAGRGRAIIILNPAEPPMIMRDTIFTLTDQVDEDAIRASVKEMVETVQAYVPGYRLKQEVQFERFGSNRPLKIPGYGEFVGLKTSVFLEVEGAGDYLPKYSGNLDIMTAAAKAAGERLAQQRLEKVAA.

An NAD(+)-binding site is contributed by 11–14 (SGNI). Cysteine 129 functions as the Acyl-thioester intermediate in the catalytic mechanism. Residues 160-168 (SAGPGTRAN) and asparagine 287 each bind NAD(+).

Belongs to the acetaldehyde dehydrogenase family.

It carries out the reaction acetaldehyde + NAD(+) + CoA = acetyl-CoA + NADH + H(+). This Sphingobium yanoikuyae (Sphingomonas yanoikuyae) protein is Acetaldehyde dehydrogenase (xylQ).